Here is a 1011-residue protein sequence, read N- to C-terminus: MKLLSSWVVAALAAQAAGAAISHKLDGFTIREHADPAKRALLQKYVTWDEHSIFVNGERLMIFSGEVHPYRLPVASLYIDIFEKVKALGFNCVSFYVDWALLEGNPGHYSAEGIFDLQPFFDAAKEAGIYLLARPGPYINAEVSGGGFPGWLQRVDGILRTSDEAYLKATDNYASNIAATIAKAQITNGGPIILYQPENEYSGACCGYNGFPDGSYMQYIEDHARDAGIVVPFISNDAWAAGHNAPGTGAGAVDIYGHDSYPLGFDCANPSTWPSGNLPTYFHTSHEQQSPSTPYSLVEFQGGAFDPWGGVGFAKCAALLNHEFERVFYKNDFSFGVAFLNLYMIFGGTNWGNLGHPGGYTSYDYGSAISESRNITREKYSELKLLGNFAKVSPGYLVANPGDLSTSTYTNTADLTVTPLLGSNSSASSFFVIRHSDYSSQASVEYKLTVPTSAGNLTIPQLGGSLTLSGRDSKIHVTDYDVAGTNILYSTAEVFTWKKFNNEKVLVLYGGPGEHHEFAVSGASSSSVVEGSSSGISSKKVGKALVVAWDVSTARRIVQVGSLKVFLLDRNSAYNYWVPQVPTKGTAPGYSNQETTASSIIVKAGYLVRSAYLDGNDLHIQADFNATTPIEVVGAPSGAKNLVINGKKTQTKVDKNGIWSASVAYTAPKVQLPSLKSLKWKSVDTLPEAKNTYDDSAWTSADHAYTNNSAHSLQTPTSLFASDYGYHTGALLFRGHFTANGKEKTFFVQTKGGTAYGHSIWINETYVGSWAGTSINDNNNATYTLPTLQSGKNYVITVVIDNMGLDEDWTIGSEDMKNPRGIIQYSLSGQEASAISWKLTGNLGGENYRDTVRGPLNEGGLYAERQGFHQPQPPTQKWDSSSPFTGLTKPGIRFYSTSFDLDLPSGYDIPLYFNFGNSTSTPAAYRVQLYVNGYQYGKYVNNIGPQTSFPVPEGILNYHGTNWLALSLWAQEDNGAKLDSFELINTTPVLTSLGEVKSVNQPKYQARKGAY.

Residues 1–19 (MKLLSSWVVAALAAQAAGA) form the signal peptide. Residues Tyr-96, 140–142 (NAE), and Asn-199 each bind substrate. Glu-200 acts as the Proton donor in catalysis. 2 disulfide bridges follow: Cys-205-Cys-206 and Cys-267-Cys-316. The active-site Nucleophile is Glu-299. Tyr-365 contributes to the substrate binding site. N-linked (GlcNAc...) asparagine glycosylation is found at Asn-374, Asn-456, Asn-625, Asn-707, Asn-763, Asn-780, and Asn-917.

The protein belongs to the glycosyl hydrolase 35 family. In terms of assembly, monomer.

It is found in the secreted. The enzyme catalyses Hydrolysis of terminal non-reducing beta-D-galactose residues in beta-D-galactosides.. Cleaves beta-linked terminal galactosyl residues from gangliosides, glycoproteins, and glycosaminoglycans. Has high in vitro transglycosylation activity with p-nitrophenyl-beta-D-galactopyranoside, methyl-beta-D-galactopyranoside or lactose as a donor and galactose as an acceptor. The polypeptide is Beta-galactosidase A (lacA) (Penicillium sp).